The chain runs to 250 residues: Prophage antitermination protein Q homolog QuuQ (250 aa).

This sequence belongs to the phage antitermination Q type 2 family.

Its function is as follows. Positively regulate expression of some phage genes. Bacterial host RNA polymerase modified by antitermination proteins transcribes through termination sites that otherwise prevent expression of the regulated genes. This is Prophage antitermination protein Q homolog QuuQ (quuQ) from Escherichia coli (strain K12).